Here is a 64-residue protein sequence, read N- to C-terminus: Large ribosomal subunit protein bL32 (64 aa).

This sequence belongs to the bacterial ribosomal protein bL32 family.

This Mycoplasma mobile (strain ATCC 43663 / 163K / NCTC 11711) (Mesomycoplasma mobile) protein is Large ribosomal subunit protein bL32.